Here is a 446-residue protein sequence, read N- to C-terminus: Phosphoglucosamine mutase (446 aa).

Residue serine 101 is the Phosphoserine intermediate of the active site. Mg(2+)-binding residues include serine 101, aspartate 240, aspartate 242, and aspartate 244. Serine 101 bears the Phosphoserine mark.

It belongs to the phosphohexose mutase family. The cofactor is Mg(2+). Activated by phosphorylation.

The catalysed reaction is alpha-D-glucosamine 1-phosphate = D-glucosamine 6-phosphate. Its function is as follows. Catalyzes the conversion of glucosamine-6-phosphate to glucosamine-1-phosphate. This chain is Phosphoglucosamine mutase, found in Coxiella burnetii (strain RSA 331 / Henzerling II).